The chain runs to 387 residues: Alanine racemase (387 aa).

Lysine 38 serves as the catalytic Proton acceptor; specific for D-alanine. Position 38 is an N6-(pyridoxal phosphate)lysine (lysine 38). Arginine 136 lines the substrate pocket. Tyrosine 267 (proton acceptor; specific for L-alanine) is an active-site residue. Methionine 315 contributes to the substrate binding site.

It belongs to the alanine racemase family. Pyridoxal 5'-phosphate is required as a cofactor.

The enzyme catalyses L-alanine = D-alanine. It functions in the pathway amino-acid biosynthesis; D-alanine biosynthesis; D-alanine from L-alanine: step 1/1. Its function is as follows. Catalyzes the interconversion of L-alanine and D-alanine. May also act on other amino acids. The protein is Alanine racemase (alr) of Clostridium novyi (strain NT).